A 242-amino-acid chain; its full sequence is Orotidine 5'-phosphate decarboxylase (242 aa).

Substrate is bound by residues Asp-16, Lys-37, 64–73 (DLKFHDIPNT), Thr-128, Arg-190, Gln-199, Gly-219, and Arg-220. Residue Lys-66 is the Proton donor of the active site.

This sequence belongs to the OMP decarboxylase family. Type 1 subfamily. Homodimer.

It carries out the reaction orotidine 5'-phosphate + H(+) = UMP + CO2. The protein operates within pyrimidine metabolism; UMP biosynthesis via de novo pathway; UMP from orotate: step 2/2. In terms of biological role, catalyzes the decarboxylation of orotidine 5'-monophosphate (OMP) to uridine 5'-monophosphate (UMP). The polypeptide is Orotidine 5'-phosphate decarboxylase (Prochlorococcus marinus (strain MIT 9312)).